A 301-amino-acid polypeptide reads, in one-letter code: ATP synthase gamma chain (301 aa).

Belongs to the ATPase gamma chain family. F-type ATPases have 2 components, CF(1) - the catalytic core - and CF(0) - the membrane proton channel. CF(1) has five subunits: alpha(3), beta(3), gamma(1), delta(1), epsilon(1). CF(0) has three main subunits: a, b and c.

Its subcellular location is the cell inner membrane. Functionally, produces ATP from ADP in the presence of a proton gradient across the membrane. The gamma chain is believed to be important in regulating ATPase activity and the flow of protons through the CF(0) complex. This chain is ATP synthase gamma chain, found in Bordetella petrii (strain ATCC BAA-461 / DSM 12804 / CCUG 43448).